A 196-amino-acid polypeptide reads, in one-letter code: Peptidyl-tRNA hydrolase (196 aa).

Tyr-21 contributes to the tRNA binding site. The Proton acceptor role is filled by His-26. Positions 72, 74, and 120 each coordinate tRNA.

It belongs to the PTH family. In terms of assembly, monomer.

The protein localises to the cytoplasm. The catalysed reaction is an N-acyl-L-alpha-aminoacyl-tRNA + H2O = an N-acyl-L-amino acid + a tRNA + H(+). Its function is as follows. Hydrolyzes ribosome-free peptidyl-tRNAs (with 1 or more amino acids incorporated), which drop off the ribosome during protein synthesis, or as a result of ribosome stalling. Catalyzes the release of premature peptidyl moieties from peptidyl-tRNA molecules trapped in stalled 50S ribosomal subunits, and thus maintains levels of free tRNAs and 50S ribosomes. The chain is Peptidyl-tRNA hydrolase from Mycobacteroides abscessus (strain ATCC 19977 / DSM 44196 / CCUG 20993 / CIP 104536 / JCM 13569 / NCTC 13031 / TMC 1543 / L948) (Mycobacterium abscessus).